Reading from the N-terminus, the 769-residue chain is 5-methyltetrahydropteroyltriglutamate--homocysteine methyltransferase (769 aa).

Residues 18 to 21 (RELK) and Lys-127 contribute to the 5-methyltetrahydropteroyltri-L-glutamate site. Residues 447 to 449 (IGS) and Glu-500 contribute to the L-homocysteine site. Residues 447–449 (IGS) and Glu-500 contribute to the L-methionine site. 5-methyltetrahydropteroyltri-L-glutamate-binding positions include 531 to 532 (RC) and Trp-577. L-homocysteine is bound at residue Asp-615. Position 615 (Asp-615) interacts with L-methionine. Position 621 (Glu-621) interacts with 5-methyltetrahydropteroyltri-L-glutamate. Residues His-657, Cys-659, and Glu-681 each coordinate Zn(2+). The Proton donor role is filled by His-710. Residue Cys-742 participates in Zn(2+) binding.

Belongs to the vitamin-B12 independent methionine synthase family. Requires Zn(2+) as cofactor.

The enzyme catalyses 5-methyltetrahydropteroyltri-L-glutamate + L-homocysteine = tetrahydropteroyltri-L-glutamate + L-methionine. It participates in amino-acid biosynthesis; L-methionine biosynthesis via de novo pathway; L-methionine from L-homocysteine (MetE route): step 1/1. Its function is as follows. Catalyzes the transfer of a methyl group from 5-methyltetrahydrofolate to homocysteine resulting in methionine formation. The polypeptide is 5-methyltetrahydropteroyltriglutamate--homocysteine methyltransferase (Chelativorans sp. (strain BNC1)).